The following is a 77-amino-acid chain: Putative Fis-like DNA-binding protein (77 aa).

Residues 53 to 72 (QSLAADYLGINRNTLRKKLQ) constitute a DNA-binding region (H-T-H motif).

It belongs to the transcriptional regulatory Fis family.

In Ralstonia nicotianae (strain ATCC BAA-1114 / GMI1000) (Ralstonia solanacearum), this protein is Putative Fis-like DNA-binding protein.